A 308-amino-acid polypeptide reads, in one-letter code: Beta-carotene hydroxylase 2, chloroplastic (308 aa).

Residues Met1–Cys59 constitute a chloroplast transit peptide. The next 2 helical transmembrane spans lie at Tyr105 to Tyr125 and Phe139 to Trp159. The Fatty acid hydroxylase domain occupies Ala152 to Phe279. The Histidine box-1 signature appears at His164 to His169. A Histidine box-2 motif is present at residues His176 to His180. 2 helical membrane-spanning segments follow: residues Asp191–His211 and Ile215–Phe235. The short motif at His237–His242 is the Histidine box-3 element. The Histidine box-4 motif lies at His263 to His267.

Belongs to the sterol desaturase family.

It localises to the plastid. It is found in the chloroplast membrane. It carries out the reaction all-trans-beta-carotene + 4 reduced [2Fe-2S]-[ferredoxin] + 2 O2 + 4 H(+) = all-trans-zeaxanthin + 4 oxidized [2Fe-2S]-[ferredoxin] + 2 H2O. The enzyme catalyses all-trans-beta-carotene + 2 reduced [2Fe-2S]-[ferredoxin] + O2 + 2 H(+) = beta-cryptoxanthin + 2 oxidized [2Fe-2S]-[ferredoxin] + H2O. It catalyses the reaction beta-cryptoxanthin + 2 reduced [2Fe-2S]-[ferredoxin] + O2 + 2 H(+) = all-trans-zeaxanthin + 2 oxidized [2Fe-2S]-[ferredoxin] + H2O. Its activity is regulated as follows. Inhibited by o-phenanthroline and 8-hydroxyquinoline. Functionally, nonheme diiron monooxygenase involved in the biosynthesis of xanthophylls. Specific for beta-ring hydroxylations of beta-carotene. Produces beta-cryptoxanthin and zeaxanthin. Uses ferredoxin as an electron donor. This chain is Beta-carotene hydroxylase 2, chloroplastic, found in Capsicum annuum (Capsicum pepper).